The following is a 561-amino-acid chain: Rho guanine nucleotide exchange factor 9 (561 aa).

The SH3 domain occupies 53–112 (DSIVSAEAVWDHVTMANRELAFKAGDVIKVLDASNKDWWWGQIDDEEGWFPASFVRLWVN). The interaction with GPHN stretch occupies residues 145–155 (RDQMRANVINE). The region spanning 148–332 (MRANVINEIM…RNVTQQINER (185 aa)) is the DH domain. The 108-residue stretch at 363–470 (ELIYTGEMAW…WLRAFREERK (108 aa)) folds into the PH domain. Residues 499–524 (KQKGVNSARSVPPSYPPPQDPLNQGQ) are disordered. Residue serine 547 is modified to Phosphoserine.

Interacts with GPHN.

The protein resides in the cytoplasm. The protein localises to the postsynaptic density. In terms of biological role, acts as a guanine nucleotide exchange factor (GEF) for CDC42. Promotes formation of GPHN clusters. This chain is Rho guanine nucleotide exchange factor 9 (ARHGEF9), found in Bos taurus (Bovine).